The chain runs to 170 residues: Cysteine-rich uncharacterized protein 241L (170 aa).

This Acheta domesticus (House cricket) protein is Cysteine-rich uncharacterized protein 241L.